The sequence spans 412 residues: Protein trichome birefringence-like 13 (412 aa).

Residues 9-29 (PSLFPLLSLLCFISIFLLLSL) form a helical; Signal-anchor for type II membrane protein membrane-spanning segment. A GDS motif motif is present at residues 137 to 139 (GDS). The DCXHWCLPGXXDXWN motif motif lies at 385-399 (DCMHWCLPGLTDTWN).

It belongs to the PC-esterase family. TBL subfamily.

It localises to the membrane. Functionally, may act as a bridging protein that binds pectin and other cell wall polysaccharides. Probably involved in maintaining esterification of pectins. May be involved in the specific O-acetylation of cell wall polymers. This chain is Protein trichome birefringence-like 13 (TBL13), found in Arabidopsis thaliana (Mouse-ear cress).